A 382-amino-acid polypeptide reads, in one-letter code: Secreted RxLR effector protein 118 (382 aa).

A signal peptide spans 1–21 (MRGAYYVTIALLVVASSQISA). The short motif at 48–65 (RSLRGSRDVSNDVAIEER) is the RxLR-dEER element. Residues 308 to 382 (MNKASTSKGK…AVTSLSSISN (75 aa)) are disordered. Residues 310–323 (KASTSKGKSSVFTR) show a composition bias toward polar residues.

This sequence belongs to the RxLR effector family.

The protein localises to the secreted. It is found in the host nucleus. Its function is as follows. Secreted effector that completely suppresses the host cell death induced by cell death-inducing proteins. This chain is Secreted RxLR effector protein 118, found in Plasmopara viticola (Downy mildew of grapevine).